We begin with the raw amino-acid sequence, 514 residues long: Glucose-6-phosphate 1-dehydrogenase 2 (514 aa).

NADP(+) contacts are provided by arginine 69 and lysine 176. Histidine 206, lysine 210, glutamate 244, and aspartate 263 together coordinate substrate. Residue histidine 268 is the Proton acceptor of the active site. Position 366 (lysine 366) interacts with substrate.

Belongs to the glucose-6-phosphate dehydrogenase family.

It catalyses the reaction D-glucose 6-phosphate + NADP(+) = 6-phospho-D-glucono-1,5-lactone + NADPH + H(+). It functions in the pathway carbohydrate degradation; pentose phosphate pathway; D-ribulose 5-phosphate from D-glucose 6-phosphate (oxidative stage): step 1/3. Functionally, catalyzes the oxidation of glucose 6-phosphate to 6-phosphogluconolactone. The polypeptide is Glucose-6-phosphate 1-dehydrogenase 2 (Mycobacterium bovis (strain ATCC BAA-935 / AF2122/97)).